The primary structure comprises 382 residues: Rubredoxin-NAD(+) reductase (382 aa).

Residues 9–12 (TGLA), 33–34 (TA), Lys42, Val80, Glu156, Asp275, Val287, and Lys318 contribute to the FAD site.

It belongs to the FAD-dependent oxidoreductase family. Homodimer. FAD serves as cofactor.

Its subcellular location is the cytoplasm. The catalysed reaction is 2 reduced [rubredoxin] + NAD(+) + H(+) = 2 oxidized [rubredoxin] + NADH. The protein operates within hydrocarbon metabolism; alkane degradation. In terms of biological role, involved in the hydrocarbon hydroxylating system, which transfers electrons from NADH to rubredoxin reductase and then through rubredoxin to alkane 1 monooxygenase. The protein is Rubredoxin-NAD(+) reductase (rubB) of Alcanivorax borkumensis (strain ATCC 700651 / DSM 11573 / NCIMB 13689 / SK2).